The chain runs to 156 residues: Endoribonuclease YbeY (156 aa).

Zn(2+) contacts are provided by His-122, His-126, and His-132.

It belongs to the endoribonuclease YbeY family. It depends on Zn(2+) as a cofactor.

It localises to the cytoplasm. In terms of biological role, single strand-specific metallo-endoribonuclease involved in late-stage 70S ribosome quality control and in maturation of the 3' terminus of the 16S rRNA. The polypeptide is Endoribonuclease YbeY (Geobacillus thermodenitrificans (strain NG80-2)).